Reading from the N-terminus, the 101-residue chain is Urease subunit beta (101 aa).

Belongs to the urease beta subunit family. In terms of assembly, heterotrimer of UreA (gamma), UreB (beta) and UreC (alpha) subunits. Three heterotrimers associate to form the active enzyme.

It is found in the cytoplasm. The enzyme catalyses urea + 2 H2O + H(+) = hydrogencarbonate + 2 NH4(+). Its pathway is nitrogen metabolism; urea degradation; CO(2) and NH(3) from urea (urease route): step 1/1. The sequence is that of Urease subunit beta from Azotobacter vinelandii (strain DJ / ATCC BAA-1303).